The sequence spans 515 residues: 2-isopropylmalate synthase (515 aa).

Positions 4–266 (ISVFDTTLRD…ETGLILKEIK (263 aa)) constitute a Pyruvate carboxyltransferase domain. 4 residues coordinate Mn(2+): Asp13, His201, His203, and Asn237. The tract at residues 391–515 (ELQTLQVNYG…AEVYGSKVEV (125 aa)) is regulatory domain.

This sequence belongs to the alpha-IPM synthase/homocitrate synthase family. LeuA type 1 subfamily. In terms of assembly, homodimer. Mn(2+) is required as a cofactor.

It localises to the cytoplasm. It catalyses the reaction 3-methyl-2-oxobutanoate + acetyl-CoA + H2O = (2S)-2-isopropylmalate + CoA + H(+). It participates in amino-acid biosynthesis; L-leucine biosynthesis; L-leucine from 3-methyl-2-oxobutanoate: step 1/4. Its function is as follows. Catalyzes the condensation of the acetyl group of acetyl-CoA with 3-methyl-2-oxobutanoate (2-ketoisovalerate) to form 3-carboxy-3-hydroxy-4-methylpentanoate (2-isopropylmalate). This Halalkalibacterium halodurans (strain ATCC BAA-125 / DSM 18197 / FERM 7344 / JCM 9153 / C-125) (Bacillus halodurans) protein is 2-isopropylmalate synthase.